Reading from the N-terminus, the 122-residue chain is Large ribosomal subunit protein uL14 (122 aa).

Belongs to the universal ribosomal protein uL14 family. In terms of assembly, part of the 50S ribosomal subunit. Forms a cluster with proteins L3 and L19. In the 70S ribosome, L14 and L19 interact and together make contacts with the 16S rRNA in bridges B5 and B8.

Functionally, binds to 23S rRNA. Forms part of two intersubunit bridges in the 70S ribosome. This is Large ribosomal subunit protein uL14 from Caldicellulosiruptor bescii (strain ATCC BAA-1888 / DSM 6725 / KCTC 15123 / Z-1320) (Anaerocellum thermophilum).